We begin with the raw amino-acid sequence, 431 residues long: ORC1-type DNA replication protein 14 (431 aa).

ATP contacts are provided by residues 62–66 (TGKSL), Tyr219, and Arg231.

It belongs to the CDC6/cdc18 family.

Functionally, involved in regulation of DNA replication. The sequence is that of ORC1-type DNA replication protein 14 (cdc6n) from Haloarcula marismortui (strain ATCC 43049 / DSM 3752 / JCM 8966 / VKM B-1809) (Halobacterium marismortui).